The primary structure comprises 208 residues: Uracil phosphoribosyltransferase (208 aa).

Residues Arg-78, Arg-103, and 130–138 (DPMLATGGT) contribute to the 5-phospho-alpha-D-ribose 1-diphosphate site. Residues Ile-193 and 198–200 (GDA) each bind uracil. Asp-199 provides a ligand contact to 5-phospho-alpha-D-ribose 1-diphosphate.

This sequence belongs to the UPRTase family. It depends on Mg(2+) as a cofactor.

The catalysed reaction is UMP + diphosphate = 5-phospho-alpha-D-ribose 1-diphosphate + uracil. It functions in the pathway pyrimidine metabolism; UMP biosynthesis via salvage pathway; UMP from uracil: step 1/1. Its activity is regulated as follows. Allosterically activated by GTP. Its function is as follows. Catalyzes the conversion of uracil and 5-phospho-alpha-D-ribose 1-diphosphate (PRPP) to UMP and diphosphate. The chain is Uracil phosphoribosyltransferase from Solidesulfovibrio magneticus (strain ATCC 700980 / DSM 13731 / RS-1) (Desulfovibrio magneticus).